The chain runs to 452 residues: MAQHFSLAACDVVGFDLDHTLCCYNLPESARLIYNSFAQFLVKEKGYDKGLLTVTPEDWDFCCKGLALDLEDGNFIKLADNGTVLRASHGTKMLSAEALAEEFGRKEWKHFMPDTGMAFRSGKYYFYDNYFDLPGALLCARVVDSLTKQNNGQKPFDFWKDIVAGIQHNYKMSAFKENCGIYFPEIKRDPGKYLHTCPESVKKWLRQLKNAGKILMLITSSHSDYCRLLCQYILGNDFEDLFDIVITNALKPGFFSHLPSQRPFRTLENDEEREALPFLDKPGWYSQGNAVHLYELLKKMTGKPEPKVVYFGDSMHSDIFPACHYSNWETVLILEELRGDKDGKPEESEPEEKKGKYEGSKAKPLNTSSKKWGSFFIDSVSGLENREDSLVYTWSCKRISAYSTIAIPSIEAIAELPLDYKFTRFSSNNSKTAGYYPNPPLVLSNAGKLTAK.

The active-site Nucleophile is D16. Mg(2+) is bound by residues D16 and D18. D18 acts as the Proton donor in catalysis. N6-acetyllysine is present on K171. D313 is a Mg(2+) binding site. The segment covering 339–361 (GDKDGKPEESEPEEKKGKYEGSK) has biased composition (basic and acidic residues). The segment at 339–365 (GDKDGKPEESEPEEKKGKYEGSKAKPL) is disordered.

This sequence belongs to the 5'(3')-deoxyribonucleotidase family.

This is 5'-nucleotidase domain-containing protein 1 (NT5DC1) from Bos taurus (Bovine).